A 294-amino-acid polypeptide reads, in one-letter code: ATP phosphoribosyltransferase (294 aa).

The protein belongs to the ATP phosphoribosyltransferase family. Long subfamily. Mg(2+) serves as cofactor.

The protein resides in the cytoplasm. The enzyme catalyses 1-(5-phospho-beta-D-ribosyl)-ATP + diphosphate = 5-phospho-alpha-D-ribose 1-diphosphate + ATP. Its pathway is amino-acid biosynthesis; L-histidine biosynthesis; L-histidine from 5-phospho-alpha-D-ribose 1-diphosphate: step 1/9. Feedback inhibited by histidine. Catalyzes the condensation of ATP and 5-phosphoribose 1-diphosphate to form N'-(5'-phosphoribosyl)-ATP (PR-ATP). Has a crucial role in the pathway because the rate of histidine biosynthesis seems to be controlled primarily by regulation of HisG enzymatic activity. The polypeptide is ATP phosphoribosyltransferase (Chlorobium chlorochromatii (strain CaD3)).